We begin with the raw amino-acid sequence, 369 residues long: Small RNA 2'-O-methyltransferase (369 aa).

S-adenosyl-L-methionine is bound by residues S39, D57, and S93. Mg(2+) contacts are provided by E111, E114, H115, and H161.

Belongs to the methyltransferase superfamily. HEN1 family. The cofactor is Mg(2+).

The protein resides in the cytoplasm. The enzyme catalyses small RNA 3'-end nucleotide + S-adenosyl-L-methionine = small RNA 3'-end 2'-O-methylnucleotide + S-adenosyl-L-homocysteine + H(+). In terms of biological role, methyltransferase that adds a 2'-O-methyl group at the 3'-end of piRNAs, a class of 24 to 30 nucleotide RNAs that are generated by a Dicer-independent mechanism and are primarily derived from transposons and other repeated sequence elements. This probably protects the 3'-end of piRNAs from uridylation activity and subsequent degradation. Stabilization of piRNAs is essential for gametogenesis. The sequence is that of Small RNA 2'-O-methyltransferase (henmt1) from Xenopus tropicalis (Western clawed frog).